Consider the following 118-residue polypeptide: Large ribosomal subunit protein bL20 (118 aa).

The protein belongs to the bacterial ribosomal protein bL20 family.

Functionally, binds directly to 23S ribosomal RNA and is necessary for the in vitro assembly process of the 50S ribosomal subunit. It is not involved in the protein synthesizing functions of that subunit. This is Large ribosomal subunit protein bL20 from Salmonella arizonae (strain ATCC BAA-731 / CDC346-86 / RSK2980).